The primary structure comprises 224 residues: MNILIFGPPGSGKSTHSRRIIEKYNLEYIASGDIIRAEINKGNALGREMKKYIEKGDLLPDTVINTLVLSRLRKKRENFIIDGYPRTAEQVLALENFLYDHGIRIKLAIDIFISKEESITRISGRRICRQCGAVYHIKYNPSKVPGKCDICGGEVIQREDDTPEIVSRRYDIYINNMEPIIKFYKGQGVYVQINGHGGIEEVWERIRPLLDYIWNREKKKEEFE.

10 to 15 (GSGKST) is a binding site for ATP. An NMP region spans residues 30 to 59 (ASGDIIRAEINKGNALGREMKKYIEKGDLL). AMP is bound by residues S31, R36, 57 to 59 (DLL), 83 to 86 (GYPR), and Q90. An LID region spans residues 124–161 (GRRICRQCGAVYHIKYNPSKVPGKCDICGGEVIQREDD). Residue R125 coordinates ATP. The Zn(2+) site is built by C128 and C131. 134 to 135 (VY) is an ATP binding site. C148 and C151 together coordinate Zn(2+). Residues R158 and R169 each coordinate AMP. ATP is bound at residue G197.

This sequence belongs to the adenylate kinase family. As to quaternary structure, monomer.

The protein resides in the cytoplasm. It catalyses the reaction AMP + ATP = 2 ADP. It participates in purine metabolism; AMP biosynthesis via salvage pathway; AMP from ADP: step 1/1. Functionally, catalyzes the reversible transfer of the terminal phosphate group between ATP and AMP. Plays an important role in cellular energy homeostasis and in adenine nucleotide metabolism. This Thermococcus sibiricus (strain DSM 12597 / MM 739) protein is Adenylate kinase.